The primary structure comprises 211 residues: Histone H1-beta, late embryonic (211 aa).

2 disordered regions span residues Met1–Ser22 and Lys81–Lys211. An H15 domain is found at Ala17–Lys91. Composition is skewed to basic and acidic residues over residues Gly95 to Lys107 and Lys114 to Ala123. 2 stretches are compositionally biased toward basic residues: residues Ala124–Ala177 and Lys185–Lys211.

The protein belongs to the histone H1/H5 family.

The protein localises to the nucleus. It localises to the chromosome. Functionally, histones H1 are necessary for the condensation of nucleosome chains into higher-order structures. This is Histone H1-beta, late embryonic from Strongylocentrotus purpuratus (Purple sea urchin).